The sequence spans 125 residues: Fluoride-specific ion channel FluC (125 aa).

A run of 4 helical transmembrane segments spans residues 5 to 25 (ILAICMGASVGALARWGLALW), 37 to 57 (LAANLVGGYLVGVAIASFHLL), 71 to 91 (GFLGGLTTFSSFSAEVVTMLL), and 97 to 117 (VALLTAAAHLGGSLFLTWLGI). Residues G74 and T77 each coordinate Na(+).

Belongs to the fluoride channel Fluc/FEX (TC 1.A.43) family.

The protein localises to the cell inner membrane. It catalyses the reaction fluoride(in) = fluoride(out). With respect to regulation, na(+) is not transported, but it plays an essential structural role and its presence is essential for fluoride channel function. Its function is as follows. Fluoride-specific ion channel. Important for reducing fluoride concentration in the cell, thus reducing its toxicity. In Variovorax paradoxus (strain S110), this protein is Fluoride-specific ion channel FluC.